We begin with the raw amino-acid sequence, 515 residues long: 2-isopropylmalate synthase (515 aa).

Residues 5-267 (VIIFDTTLRD…DTRINTQEIH (263 aa)) enclose the Pyruvate carboxyltransferase domain. 4 residues coordinate Mn(2+): D14, H202, H204, and N238. Residues 392-515 (VLDKLSAHST…VADIKSHKHH (124 aa)) form a regulatory domain region.

Belongs to the alpha-IPM synthase/homocitrate synthase family. LeuA type 1 subfamily. In terms of assembly, homodimer. Requires Mn(2+) as cofactor.

The protein localises to the cytoplasm. It carries out the reaction 3-methyl-2-oxobutanoate + acetyl-CoA + H2O = (2S)-2-isopropylmalate + CoA + H(+). It functions in the pathway amino-acid biosynthesis; L-leucine biosynthesis; L-leucine from 3-methyl-2-oxobutanoate: step 1/4. Functionally, catalyzes the condensation of the acetyl group of acetyl-CoA with 3-methyl-2-oxobutanoate (2-ketoisovalerate) to form 3-carboxy-3-hydroxy-4-methylpentanoate (2-isopropylmalate). The sequence is that of 2-isopropylmalate synthase from Haemophilus influenzae (strain 86-028NP).